The primary structure comprises 439 residues: Cln5-like protein 3 (439 aa).

A signal peptide spans 1 to 24 (MKNMLNIILTLTIIFIGLIKISIS). N-linked (GlcNAc...) asparagine glycans are attached at residues Asn93, Asn112, Asn122, Asn138, Asn168, Asn219, Asn268, Asn289, Asn304, and Asn359. The chain crosses the membrane as a helical span at residues 371 to 391 (IIFISIAIGFGVVIILYISIG).

This sequence belongs to the CLN5 family.

Its subcellular location is the membrane. This is Cln5-like protein 3 (cln5lc) from Dictyostelium discoideum (Social amoeba).